The following is a 225-amino-acid chain: Small ribosomal subunit protein uS7 (225 aa).

This sequence belongs to the universal ribosomal protein uS7 family. In terms of assembly, component of the small ribosomal subunit. Mature ribosomes consist of a small (40S) and a large (60S) subunit. The 40S subunit contains about 32 different proteins and 1 molecule of RNA (18S). The 60S subunit contains 45 different proteins and 3 molecules of RNA (25S, 5.8S and 5S).

The protein resides in the cytoplasm. Its function is as follows. Component of the ribosome, a large ribonucleoprotein complex responsible for the synthesis of proteins in the cell. The small ribosomal subunit (SSU) binds messenger RNAs (mRNAs) and translates the encoded message by selecting cognate aminoacyl-transfer RNA (tRNA) molecules. The large subunit (LSU) contains the ribosomal catalytic site termed the peptidyl transferase center (PTC), which catalyzes the formation of peptide bonds, thereby polymerizing the amino acids delivered by tRNAs into a polypeptide chain. The nascent polypeptides leave the ribosome through a tunnel in the LSU and interact with protein factors that function in enzymatic processing, targeting, and the membrane insertion of nascent chains at the exit of the ribosomal tunnel. In Candida albicans (strain SC5314 / ATCC MYA-2876) (Yeast), this protein is Small ribosomal subunit protein uS7 (RPS5).